Reading from the N-terminus, the 74-residue chain is RNA-binding protein Hfq (74 aa).

The Sm domain maps to 9-69; the sequence is DQFLNQLRKE…ISTFMPQKNV (61 aa).

It belongs to the Hfq family. Homohexamer.

RNA chaperone that binds small regulatory RNA (sRNAs) and mRNAs to facilitate mRNA translational regulation in response to envelope stress, environmental stress and changes in metabolite concentrations. Also binds with high specificity to tRNAs. The protein is RNA-binding protein Hfq of Bacillus cytotoxicus (strain DSM 22905 / CIP 110041 / 391-98 / NVH 391-98).